The sequence spans 315 residues: MEKKELSACVPFMGFSGKRLDQILSKLFMQYSRSCLKKWIIMNNVYINGKIENQPDKKILGGEKITIYSTDEKLPINLPQNIALNTIYEDSNILIINKPPGLVVHPGAGNQDGTILNALLYRYTNISSIPRCGIIHRLDKDTSGLMVIAKTIFSYNKLVTLLKKRKIIRKYQGIIKGNMISGGIVNYPIMRHPFKRICMTTDSLGKKSITHYKIINRFKFHTHVSFRLETGRTHQIRVHMLHIGYPLLGDPLYGGIDYGCNYFQENRNIYRKFNLFRQALHADYIEFIHPFTQKVMSWSASLPQDMKDILLYLKK.

The S4 RNA-binding domain occupies 18–87; the sequence is KRLDQILSKL…LPQNIALNTI (70 aa). The active site involves Asp-139.

The protein belongs to the pseudouridine synthase RluA family.

The protein resides in the cytoplasm. The enzyme catalyses uridine(1911/1915/1917) in 23S rRNA = pseudouridine(1911/1915/1917) in 23S rRNA. Its function is as follows. Responsible for synthesis of pseudouridine from uracil at positions 1911, 1915 and 1917 in 23S ribosomal RNA. In Buchnera aphidicola subsp. Schizaphis graminum (strain Sg), this protein is Ribosomal large subunit pseudouridine synthase D (rluD).